Consider the following 78-residue polypeptide: Beta sliding clamp (78 aa).

Belongs to the beta sliding clamp family. Forms a ring-shaped head-to-tail homodimer around DNA which binds and tethers DNA polymerases and other proteins to the DNA. The DNA replisome complex has a single clamp-loading complex (3 tau and 1 each of delta, delta', psi and chi subunits) which binds 3 Pol III cores (1 core on the leading strand and 2 on the lagging strand) each with a beta sliding clamp dimer. Additional proteins in the replisome are other copies of gamma, psi and chi, Ssb, DNA helicase and RNA primase.

The protein resides in the cytoplasm. Its function is as follows. Confers DNA tethering and processivity to DNA polymerases and other proteins. Acts as a clamp, forming a ring around DNA (a reaction catalyzed by the clamp-loading complex) which diffuses in an ATP-independent manner freely and bidirectionally along dsDNA. Initially characterized for its ability to contact the catalytic subunit of DNA polymerase III (Pol III), a complex, multichain enzyme responsible for most of the replicative synthesis in bacteria; Pol III exhibits 3'-5' exonuclease proofreading activity. The beta chain is required for initiation of replication as well as for processivity of DNA replication. This is Beta sliding clamp (dnaN) from Serratia marcescens.